Consider the following 291-residue polypeptide: MDLFSPAKLNLFLKLHGKTSHGFHEMTTLYQVIDFGDRLSLESSSEDSLICNLPELNTPQNLIWKSIQVFRDYTQIYSPVAWRLYKCIPIGSGIGGGSSNAATALYALNQHFQTQLSNDVLQELGKKIGMDVPLFFSLGSALGIGCGEEILSYDNDHRDERYVLYFSDQPVLTKDAFSYVRPEDFSKREECLSLYARNNDLEQSVFRFRKDLEEKKHMLKRIWSPFNAHVRMSGAGATLFVSYSREIETDPSTAKALHATIHNSQGLLVNSLRKYNGWFEHGDNLLATTRQ.

The active site involves K8. Residue 89–99 participates in ATP binding; the sequence is PIGSGIGGGSS. D131 is a catalytic residue.

It belongs to the GHMP kinase family. IspE subfamily.

It carries out the reaction 4-CDP-2-C-methyl-D-erythritol + ATP = 4-CDP-2-C-methyl-D-erythritol 2-phosphate + ADP + H(+). Its pathway is isoprenoid biosynthesis; isopentenyl diphosphate biosynthesis via DXP pathway; isopentenyl diphosphate from 1-deoxy-D-xylulose 5-phosphate: step 3/6. Catalyzes the phosphorylation of the position 2 hydroxy group of 4-diphosphocytidyl-2C-methyl-D-erythritol. This is 4-diphosphocytidyl-2-C-methyl-D-erythritol kinase from Chlamydia abortus (strain DSM 27085 / S26/3) (Chlamydophila abortus).